Reading from the N-terminus, the 396-residue chain is Phosphoglycerate kinase (396 aa).

Substrate-binding positions include 23–25, arginine 38, 61–64, arginine 122, and arginine 155; these read DFN and HMGK. ATP contacts are provided by residues lysine 206, glycine 296, glutamate 327, and 353-356; that span reads GGDS.

This sequence belongs to the phosphoglycerate kinase family. In terms of assembly, monomer.

Its subcellular location is the cytoplasm. It catalyses the reaction (2R)-3-phosphoglycerate + ATP = (2R)-3-phospho-glyceroyl phosphate + ADP. Its pathway is carbohydrate degradation; glycolysis; pyruvate from D-glyceraldehyde 3-phosphate: step 2/5. This chain is Phosphoglycerate kinase, found in Clostridium botulinum (strain Eklund 17B / Type B).